The following is a 481-amino-acid chain: 3-isopropylmalate dehydratase large subunit (481 aa).

[4Fe-4S] cluster contacts are provided by Cys357, Cys417, and Cys420. Residues Ser429 to Asn441 are compositionally biased toward polar residues. The interval Ser429 to Arg451 is disordered.

This sequence belongs to the aconitase/IPM isomerase family. LeuC type 1 subfamily. In terms of assembly, heterodimer of LeuC and LeuD. Requires [4Fe-4S] cluster as cofactor.

The enzyme catalyses (2R,3S)-3-isopropylmalate = (2S)-2-isopropylmalate. It functions in the pathway amino-acid biosynthesis; L-leucine biosynthesis; L-leucine from 3-methyl-2-oxobutanoate: step 2/4. In terms of biological role, catalyzes the isomerization between 2-isopropylmalate and 3-isopropylmalate, via the formation of 2-isopropylmaleate. This is 3-isopropylmalate dehydratase large subunit from Mycobacterium sp. (strain JLS).